A 234-amino-acid polypeptide reads, in one-letter code: Probable septum site-determining protein MinC (234 aa).

Belongs to the MinC family. Interacts with MinD and FtsZ.

In terms of biological role, cell division inhibitor that blocks the formation of polar Z ring septums. Rapidly oscillates between the poles of the cell to destabilize FtsZ filaments that have formed before they mature into polar Z rings. Prevents FtsZ polymerization. This chain is Probable septum site-determining protein MinC, found in Buchnera aphidicola subsp. Baizongia pistaciae (strain Bp).